We begin with the raw amino-acid sequence, 456 residues long: MASFPPSLVFTVRRNEPTLVLPSKSTPRELKQLSDIDDQEGLRFQVPVIMFYKRKLSMEGEDPVKVIREALAEALVFYYPFAGRLIEGPNRKLMVDCTSEGVLFIEADADIEVNQLIGDTIDPGFSYLDELLHDVPGSEGILGCPLLLIQVTRFRCGGWAFAIRLNHTMSDAPGLVQLLTTIAEFARGAEGAPSVPPVWQREFLAARQPPSITFQHHEYEQVINTTTDDNKSMTHKSFFFGPKEIRAIRSHFPPHYRSVSSTFDVLTACLWRCRTCALGLDPPKTVRISCAANGRGKHDLHVPRGYYGNVFAFPAVVSRAGMISTSSLEYTVEEVKKAKARMTGEYLRSVADLMVTKGRPLYTVAGNYIVSDTTRVGFDAIDFGWGKPVYGGPARAFPLISFYARFKNNRGEDGTVVLICLPEAAMKRFQDELKKMTEEHVDGPFEYKLIKVMSKL.

Residues His167 and Asp382 each act as proton acceptor in the active site.

This sequence belongs to the plant acyltransferase family. Expressed in fruit.

The catalysed reaction is 3-(methylsulfanyl)propanoyl-CoA + butan-1-ol = butyl 3-(methylsulfanyl)propanoate + CoA. The enzyme catalyses ethanol + benzoyl-CoA = ethyl benzoate + CoA. It carries out the reaction butan-1-ol + benzoyl-CoA = butyl benzoate + CoA. It catalyses the reaction 2-(methylsulfanyl)acetyl-CoA + butan-1-ol = butyl 2-(methylsulfanyl)acetate + CoA. In terms of biological role, involved in the biosynthesis of volatile esters which confer kiwifruit flavor. Alcohol acyl transferase that can use a wide range of alcohols as substrate to produce esters. Exhibits benzoyl-CoA:alcohol O-acyltransferase activity. This Actinidia chinensis var. chinensis (Chinese soft-hair kiwi) protein is Alcohol acyltransferase 16.